A 204-amino-acid polypeptide reads, in one-letter code: Threonylcarbamoyl-AMP synthase (204 aa).

In terms of domain architecture, YrdC-like spans 10–204 (ADELDLVANY…KDLLAGHILR (195 aa)).

This sequence belongs to the SUA5 family. TsaC subfamily.

It localises to the cytoplasm. It catalyses the reaction L-threonine + hydrogencarbonate + ATP = L-threonylcarbamoyladenylate + diphosphate + H2O. Functionally, required for the formation of a threonylcarbamoyl group on adenosine at position 37 (t(6)A37) in tRNAs that read codons beginning with adenine. Catalyzes the conversion of L-threonine, HCO(3)(-)/CO(2) and ATP to give threonylcarbamoyl-AMP (TC-AMP) as the acyladenylate intermediate, with the release of diphosphate. In Moraxella catarrhalis (strain BBH18), this protein is Threonylcarbamoyl-AMP synthase.